Here is a 181-residue protein sequence, read N- to C-terminus: Large ribosomal subunit protein uL5 (181 aa).

The protein belongs to the universal ribosomal protein uL5 family. In terms of assembly, part of the 50S ribosomal subunit; contacts the 5S rRNA and probably tRNA. Forms a bridge to the 30S subunit in the 70S ribosome.

Its function is as follows. This is one of the proteins that bind and probably mediate the attachment of the 5S RNA into the large ribosomal subunit, where it forms part of the central protuberance. In the 70S ribosome it contacts protein S13 of the 30S subunit (bridge B1b), connecting the 2 subunits; this bridge is implicated in subunit movement. May contact the P site tRNA; the 5S rRNA and some of its associated proteins might help stabilize positioning of ribosome-bound tRNAs. The protein is Large ribosomal subunit protein uL5 of Methanococcus vannielii.